The chain runs to 900 residues: uncharacterized protein (900 aa).

Basic and acidic residues predominate over residues 1-16 (MGSNKEAKNIDSKNDR). Disordered regions lie at residues 1 to 84 (MGSN…KLSS), 103 to 160 (NSSR…PDPS), 512 to 556 (NFNQ…KKSG), 568 to 613 (LAST…KSAN), and 648 to 676 (KRSSNAQLQPEDEPPLSSPISSNSDNSFP). A compositionally biased stretch (polar residues) spans 17-27 (GLTSITSNKIS). Residues 30 to 58 (KAHDNHTSSMITEHKNADKEKGKQEKESR) are compositionally biased toward basic and acidic residues. 2 stretches are compositionally biased toward low complexity: residues 63 to 76 (QSSSSVESHSPQVS) and 103 to 127 (NSSRRSSDSAASSSVSKLKSAQLSK). Phosphoserine is present on serine 105. Residues 129–143 (GLHHHHTSNNKHSHR) show a composition bias toward basic residues. Residues 528–537 (SSRSLSLPSS) are compositionally biased toward low complexity. The span at 543-553 (KRKKSPTKATK) shows a compositional bias: basic residues. Composition is skewed to low complexity over residues 570 to 601 (STSHTTSPSVSPSISSSSSPKIQPQSHISSPP) and 665 to 676 (SPISSNSDNSFP).

This is an uncharacterized protein from Saccharomyces cerevisiae (strain ATCC 204508 / S288c) (Baker's yeast).